A 118-amino-acid polypeptide reads, in one-letter code: U16-barytoxin-Tl1c (118 aa).

The N-terminal stretch at 1 to 16 (MKTIIVFLSFLVLVLA) is a signal peptide. A propeptide spanning residues 17–76 (TKFGDANEGVNREQTKEVIQNEFRGDFLNEMAAMSLLQQLEAIESALLEKEADRNSRQKR) is cleaved from the precursor. Cystine bridges form between Cys77/Cys92, Cys84/Cys97, and Cys91/Cys112.

This sequence belongs to the neurotoxin 14 (magi-1) family. 06 (ICK-Trit) subfamily. In terms of tissue distribution, expressed by the venom gland.

The protein resides in the secreted. Its function is as follows. Ion channel inhibitor. This is U16-barytoxin-Tl1c from Trittame loki (Brush-footed trapdoor spider).